The sequence spans 310 residues: 4-hydroxyproline 2-epimerase (310 aa).

Residue C88 is the Proton acceptor of the active site. Substrate contacts are provided by residues 89–90, H208, and D232; that span reads GH. The Proton donor role is filled by C236. Position 237 to 238 (237 to 238) interacts with substrate; the sequence is GT.

Belongs to the proline racemase family.

The enzyme catalyses trans-4-hydroxy-L-proline = cis-4-hydroxy-D-proline. Functionally, catalyzes the epimerization of trans-4-hydroxy-L-proline (t4LHyp) to cis-4-hydroxy-D-proline (c4DHyp). Is likely involved in a degradation pathway that converts t4LHyp to alpha-ketoglutarate. Displays no proline racemase activity. In Burkholderia cenocepacia (strain ATCC BAA-245 / DSM 16553 / LMG 16656 / NCTC 13227 / J2315 / CF5610) (Burkholderia cepacia (strain J2315)), this protein is 4-hydroxyproline 2-epimerase.